Here is a 650-residue protein sequence, read N- to C-terminus: Pentatricopeptide repeat-containing protein At2g41080 (650 aa).

12 PPR repeats span residues 43–77 (NTSL…GFSS), 78–112 (DKFI…NYMS), 114–139 (NILI…MPDR), 140–174 (KLTT…GFSP), 175–209 (DEYT…GLEL), 210–240 (DLVV…MPVR), 241–275 (NLVA…GCRP), 276–310 (NKIT…GASS), 311–341 (VVAV…REDE), 342–372 (DEVM…MAEQ), 378–413 (NEVA…GFKP), and 414–444 (GLKH…MPIK). The type E motif stretch occupies residues 449–524 (IWKTLLSACN…EAGISWFEHK (76 aa)). The tract at residues 525-555 (GEVHQFKMGDRSQSKSKEIYSYLKELTLEMK) is type E(+) motif. The type DYW motif stretch occupies residues 556 to 650 (LKGYKPDTAS…NGKCSCGDYW (95 aa)).

The protein belongs to the PPR family. PCMP-H subfamily.

The protein is Pentatricopeptide repeat-containing protein At2g41080 (PCMP-H29) of Arabidopsis thaliana (Mouse-ear cress).